A 145-amino-acid chain; its full sequence is 3-hydroxyacyl-[acyl-carrier-protein] dehydratase FabZ (145 aa).

His-48 is an active-site residue.

The protein belongs to the thioester dehydratase family. FabZ subfamily.

It is found in the cytoplasm. The enzyme catalyses a (3R)-hydroxyacyl-[ACP] = a (2E)-enoyl-[ACP] + H2O. Functionally, involved in unsaturated fatty acids biosynthesis. Catalyzes the dehydration of short chain beta-hydroxyacyl-ACPs and long chain saturated and unsaturated beta-hydroxyacyl-ACPs. The protein is 3-hydroxyacyl-[acyl-carrier-protein] dehydratase FabZ of Cellvibrio japonicus (strain Ueda107) (Pseudomonas fluorescens subsp. cellulosa).